We begin with the raw amino-acid sequence, 134 residues long: uncharacterized protein (134 aa).

Residues 4-24 traverse the membrane as a helical segment; it reads NLLILLSLLLVVVAIMWWLYE.

The protein resides in the membrane. This is an uncharacterized protein from Invertebrate iridescent virus 6 (IIV-6).